Consider the following 154-residue polypeptide: Insulin-like growth factor 1 (154 aa).

The segment at 50–78 (GPETLCGAELVDALQFVCGDRGFYFNKPT) is b. 3 cysteine pairs are disulfide-bonded: C55/C97, C67/C110, and C96/C101. The c stretch occupies residues 79-90 (GYGSSSRRAPQT). Positions 91–111 (GIVDECCFRSCDLRRLEMYCA) are a. The interval 112–119 (PLKAAKSA) is d. Residues 120 to 154 (RSVRAQRHTDMPKAQKEVHLKNTSRGSAGNKNYRM) constitute a propeptide, e peptide. The disordered stretch occupies residues 121–154 (SVRAQRHTDMPKAQKEVHLKNTSRGSAGNKNYRM). Positions 126–139 (RHTDMPKAQKEVHL) are enriched in basic and acidic residues. The span at 140-154 (KNTSRGSAGNKNYRM) shows a compositional bias: polar residues.

The protein belongs to the insulin family. Forms a ternary complex with IGFR1 and ITGAV:ITGB3. Forms a ternary complex with IGFR1 and ITGA6:ITGB4. Forms a ternary complex with IGFBP3 and ALS.

The protein resides in the secreted. In terms of biological role, the insulin-like growth factors, isolated from plasma, are structurally and functionally related to insulin but have a much higher growth-promoting activity. May be a physiological regulator of [1-14C]-2-deoxy-D-glucose (2DG) transport and glycogen synthesis in osteoblasts. Stimulates glucose transport in bone-derived osteoblastic (PyMS) cells and is effective at much lower concentrations than insulin, not only regarding glycogen and DNA synthesis but also with regard to enhancing glucose uptake. May play a role in synapse maturation. Ca(2+)-dependent exocytosis of IGF1 is required for sensory perception of smell in the olfactory bulb. Acts as a ligand for IGF1R. Binds to the alpha subunit of IGF1R, leading to the activation of the intrinsic tyrosine kinase activity which autophosphorylates tyrosine residues in the beta subunit thus initiating a cascade of down-stream signaling events leading to activation of the PI3K-AKT/PKB and the Ras-MAPK pathways. Binds to integrins ITGAV:ITGB3 and ITGA6:ITGB4. Its binding to integrins and subsequent ternary complex formation with integrins and IGFR1 are essential for IGF1 signaling. Induces the phosphorylation and activation of IGFR1, MAPK3/ERK1, MAPK1/ERK2 and AKT1. As part of the MAPK/ERK signaling pathway, acts as a negative regulator of apoptosis in cardiomyocytes via promotion of STUB1/CHIP-mediated ubiquitination and degradation of ICER-type isoforms of CREM. In Ovis aries (Sheep), this protein is Insulin-like growth factor 1.